The following is a 189-amino-acid chain: Crossover junction endodeoxyribonuclease RuvC (189 aa).

Residues aspartate 7, glutamate 68, and aspartate 141 contribute to the active site. Mg(2+) contacts are provided by aspartate 7, glutamate 68, and aspartate 141.

The protein belongs to the RuvC family. In terms of assembly, homodimer which binds Holliday junction (HJ) DNA. The HJ becomes 2-fold symmetrical on binding to RuvC with unstacked arms; it has a different conformation from HJ DNA in complex with RuvA. In the full resolvosome a probable DNA-RuvA(4)-RuvB(12)-RuvC(2) complex forms which resolves the HJ. The cofactor is Mg(2+).

The protein resides in the cytoplasm. It catalyses the reaction Endonucleolytic cleavage at a junction such as a reciprocal single-stranded crossover between two homologous DNA duplexes (Holliday junction).. Functionally, the RuvA-RuvB-RuvC complex processes Holliday junction (HJ) DNA during genetic recombination and DNA repair. Endonuclease that resolves HJ intermediates. Cleaves cruciform DNA by making single-stranded nicks across the HJ at symmetrical positions within the homologous arms, yielding a 5'-phosphate and a 3'-hydroxyl group; requires a central core of homology in the junction. The consensus cleavage sequence is 5'-(A/T)TT(C/G)-3'. Cleavage occurs on the 3'-side of the TT dinucleotide at the point of strand exchange. HJ branch migration catalyzed by RuvA-RuvB allows RuvC to scan DNA until it finds its consensus sequence, where it cleaves and resolves the cruciform DNA. The chain is Crossover junction endodeoxyribonuclease RuvC from Chlorobium phaeovibrioides (strain DSM 265 / 1930) (Prosthecochloris vibrioformis (strain DSM 265)).